The following is a 189-amino-acid chain: Small ribosomal subunit protein uS5 (189 aa).

Residues 22–85 (FVDKLVAINR…ESAKRDLIFV (64 aa)) enclose the S5 DRBM domain.

The protein belongs to the universal ribosomal protein uS5 family. Part of the 30S ribosomal subunit. Contacts proteins S4 and S8.

Its function is as follows. With S4 and S12 plays an important role in translational accuracy. Functionally, located at the back of the 30S subunit body where it stabilizes the conformation of the head with respect to the body. The protein is Small ribosomal subunit protein uS5 of Allorhizobium ampelinum (strain ATCC BAA-846 / DSM 112012 / S4) (Agrobacterium vitis (strain S4)).